The following is a 354-amino-acid chain: Cytoplasmic tRNA 2-thiolation protein 1 (354 aa).

It belongs to the TtcA family. CTU1/NCS6/ATPBD3 subfamily.

It localises to the cytoplasm. The protein operates within tRNA modification; 5-methoxycarbonylmethyl-2-thiouridine-tRNA biosynthesis. Plays a central role in 2-thiolation of mcm(5)S(2)U at tRNA wobble positions of tRNA(Lys), tRNA(Glu) and tRNA(Gln). Directly binds tRNAs and probably acts by catalyzing adenylation of tRNAs, an intermediate required for 2-thiolation. It is unclear whether it acts as a sulfurtransferase that transfers sulfur from thiocarboxylated URM1 onto the uridine of tRNAs at wobble position. Prior mcm(5) tRNA modification by the elongator complex is required for 2-thiolation. May also be involved in protein urmylation. The sequence is that of Cytoplasmic tRNA 2-thiolation protein 1 from Laccaria bicolor (strain S238N-H82 / ATCC MYA-4686) (Bicoloured deceiver).